The chain runs to 689 residues: Outer spore wall assembly protein SHE10 (689 aa).

Residues 1–18 (MKILTKFFLLLVVTTCSL) form the signal peptide. The tract at residues 259–308 (TKAKSKSKPRVNASASARGNARAGAKAGAKAGTSEISASATADPTTSASA) is disordered. Low complexity predominate over residues 270 to 308 (NASASARGNARAGAKAGAKAGTSEISASATADPTTSASA). The stretch at 406 to 435 (NKTKTVSEVLQNRYKNLNRAIQDINCTCET) forms a coiled coil. Basic and acidic residues predominate over residues 610-626 (EQESKQREDSPRMDRDS). The tract at residues 610-689 (EQESKQREDS…TVQNNVTLQI (80 aa)) is disordered. Polar residues-rich tracts occupy residues 627–637 (TQNVENSNTTT), 655–670 (QNGTNSTEKFSAGPDS), and 677–689 (METTVQNNVTLQI).

The protein belongs to the SHE10 family. Component of the mitochondria-localized RNase mitochondrial RNA-processing (RNase MRP) composed of one single RNA encoded by the NME1 gene and at least 31 proteins. Absent in the nucleus-localized RNase MRP (NuMRP).

It is found in the mitochondrion. Its function is as follows. Involved in spore wall assembly. May be a component of the mitochondrial RNase MRP (MtMRP), a ribonucleoprotein endoribonuclease involved in the cleaving RNA transcripts to generate primers for DNA replication in mitochondria. The chain is Outer spore wall assembly protein SHE10 from Zygosaccharomyces rouxii (strain ATCC 2623 / CBS 732 / NBRC 1130 / NCYC 568 / NRRL Y-229).